A 208-amino-acid chain; its full sequence is ATP synthase subunit beta, chloroplastic (208 aa).

It belongs to the ATPase alpha/beta chains family. F-type ATPases have 2 components, CF(1) - the catalytic core - and CF(0) - the membrane proton channel. CF(1) has five subunits: alpha(3), beta(3), gamma(1), delta(1), epsilon(1). CF(0) has four main subunits: a(1), b(1), b'(1) and c(9-12).

It localises to the plastid. The protein localises to the chloroplast thylakoid membrane. The catalysed reaction is ATP + H2O + 4 H(+)(in) = ADP + phosphate + 5 H(+)(out). Produces ATP from ADP in the presence of a proton gradient across the membrane. The catalytic sites are hosted primarily by the beta subunits. The chain is ATP synthase subunit beta, chloroplastic (atpB) from Lonchitis hirsuta (Tomato fern).